The chain runs to 704 residues: Mannan-binding lectin serine protease 1 (704 aa).

Residues 1-24 (MRFLSFWRLLLYHALCLALPEVSA) form the signal peptide. In terms of domain architecture, CUB 1 spans 25-143 (HTVELNEMFG…TGFDAHYMAV (119 aa)). Positions 25 to 189 (HTVELNEMFG…HTDNRTCRVE (165 aa)) are homodimerization. The interval 25–189 (HTVELNEMFG…HTDNRTCRVE (165 aa)) is interaction with MBL2. Residues 25-283 (HTVELNEMFG…STQTHSVQIL (259 aa)) form an interaction with FCN2 region. Residues 25–305 (HTVELNEMFG…RLSYRAAGNE (281 aa)) form an interaction with MBL1 region. An N-linked (GlcNAc...) asparagine glycan is attached at Asn-54. Glu-73, Asp-81, Asp-126, Ser-128, Asp-144, Val-145, and Glu-147 together coordinate Ca(2+). Residues Cys-78 and Cys-96 are joined by a disulfide bond. Residues 144-187 (DVDECKEREDEELSCDHYCHNYIGGYYCSCRFGYILHTDNRTCR) enclose the EGF-like; calcium-binding domain. Cystine bridges form between Cys-148-Cys-162, Cys-158-Cys-171, Cys-173-Cys-186, and Cys-190-Cys-217. 3 residues coordinate Ca(2+): Asn-164, Tyr-165, and Gly-168. (3R)-3-hydroxyasparagine is present on Asn-164. N-linked (GlcNAc...) asparagine glycosylation occurs at Asn-183. The CUB 2 domain maps to 190-302 (CSGNLFTQRT…RGWRLSYRAA (113 aa)). Glu-240, Asp-250, Asp-287, and Ser-289 together coordinate Ca(2+). A disulfide bond links Cys-247 and Cys-265. 2 consecutive Sushi domains span residues 304–369 (NECP…TCKI) and 370–439 (VDCG…TCLP). 8 disulfides stabilise this stretch: Cys-306–Cys-354, Cys-334–Cys-367, Cys-372–Cys-419, Cys-402–Cys-437, Cys-441–Cys-577, Cys-480–Cys-496, Cys-619–Cys-636, and Cys-647–Cys-677. N-linked (GlcNAc...) asparagine glycosylation is found at Asn-390 and Asn-412. One can recognise a Peptidase S1 domain in the interval 454–701 (IFNGRPAQKG…NKDWIQRITG (248 aa)). Residues His-495 and Asp-557 each act as charge relay system in the active site. The active-site Charge relay system is the Ser-651.

It belongs to the peptidase S1 family. In terms of assembly, homodimer. Interacts with the oligomeric lectins MBL2, FCN2 and FCN3; triggers the lectin pathway of complement through activation of C3. Interacts with SERPING1. Interacts with COLEC11; probably triggers the lectin pathway of complement. Post-translationally, the iron and 2-oxoglutarate dependent 3-hydroxylation of aspartate and asparagine is (R) stereospecific within EGF domains. N-glycosylated. Some N-linked glycan are of the complex-type. In terms of processing, autoproteolytic processing of the proenzyme produces the active enzyme composed on the heavy and the light chain held together by a disulfide bond. Isoform 1 but not isoform 2 is activated through autoproteolytic processing. As to expression, protein of the plasma which is primarily expressed by liver.

It localises to the secreted. Inhibited by SERPING1 and A2M. In terms of biological role, functions in the lectin pathway of complement, which performs a key role in innate immunity by recognizing pathogens through patterns of sugar moieties and neutralizing them. The lectin pathway is triggered upon binding of mannan-binding lectin (MBL) and ficolins to sugar moieties which leads to activation of the associated proteases MASP1 and MASP2. Functions as an endopeptidase and may activate MASP2 or C2 or directly activate C3 the key component of complement reaction. Isoform 2 may have an inhibitory effect on the activation of the lectin pathway of complement or may cleave IGFBP5. Also plays a role in development. The sequence is that of Mannan-binding lectin serine protease 1 (Masp1) from Mus musculus (Mouse).